Here is a 1142-residue protein sequence, read N- to C-terminus: Zinc finger MYM-type protein 1 (1142 aa).

Lys-25 is covalently cross-linked (Glycyl lysine isopeptide (Lys-Gly) (interchain with G-Cter in SUMO2)). MYM-type zinc fingers lie at residues 110–148 (QLFC…PKDV), 160–203 (KTFC…QYEV), and 210–245 (HNLC…SSSL). Lys-284 is covalently cross-linked (Glycyl lysine isopeptide (Lys-Gly) (interchain with G-Cter in SUMO2)). An MYM-type 4 zinc finger spans residues 300 to 331 (ELFCSINCFSAYSKAKMESSSVSVVSVVHDTS). A compositionally biased stretch (polar residues) spans 385–396 (KSSPSEPSNAVA). The interval 385 to 413 (KSSPSEPSNAVASSSTEQPSVSPSSSVFS) is disordered. Low complexity predominate over residues 397-413 (SSSTEQPSVSPSSSVFS). The segment at 452 to 538 (KSRSIKKSCC…YQFCDGAVSD (87 aa)) adopts a TTF-type zinc-finger fold.

The protein localises to the nucleus. The protein is Zinc finger MYM-type protein 1 (ZMYM1) of Homo sapiens (Human).